A 992-amino-acid polypeptide reads, in one-letter code: Disks large-associated protein 4 (992 aa).

Positions 1 to 20 (MKGLGDSRPRHLSDSLDPPH) are enriched in basic and acidic residues. 2 disordered regions span residues 1 to 31 (MKGLGDSRPRHLSDSLDPPHEPLFAGPDRNP) and 157 to 225 (MEGT…PASG). Residues 162 to 171 (GKVGGNGSKK) are compositionally biased toward gly residues. A compositionally biased stretch (basic and acidic residues) spans 172–194 (GGLEDGKGRRAKSKERAKAGEPK). Residues 199-208 (SNISGWWSSD) are compositionally biased toward polar residues. Phosphoserine is present on residues S206 and S207. R290 bears the Omega-N-methylarginine mark. Residues 342 to 396 (TTLLSPRDMDSTAEGPIPCRRMRSGSYIKAMGDEDSDESGGGSPKPSPKTAARRQ) form a disordered region. Phosphoserine is present on residues S377, S380, S384, S388, S405, S415, and S421. 3 disordered regions span residues 527–751 (SVSL…GPRQ), 763–798 (SYGDNSDPALEASSLPPPDPWLETSSSSPAEPAQPG), and 915–992 (TPEK…QTRL). Residues 528-554 (VSLQSLSPPPSTGSLSNSRTLPSSSCL) are compositionally biased toward low complexity. The segment covering 576–591 (VTVQSSTESAQDTYLD) has biased composition (polar residues). Phosphoserine occurs at positions 580, 581, 609, 611, 665, and 744. Residues 600–620 (TSQSGLSNSSDSLDSSTRPPS) show a composition bias toward low complexity. T915 bears the Phosphothreonine mark. Basic and acidic residues-rich tracts occupy residues 915–925 (TPEKRKEEKKP) and 940–958 (VSRDKASDAGDKQRQEARK). Residues 969-978 (VRQNSATESA) show a composition bias toward polar residues. A Phosphoserine modification is found at S973.

This sequence belongs to the SAPAP family. In terms of assembly, interacts with DLG1 and DLG4/PSD-95.

The protein resides in the membrane. In terms of biological role, may play a role in the molecular organization of synapses and neuronal cell signaling. Could be an adapter protein linking ion channel to the subsynaptic cytoskeleton. May induce enrichment of PSD-95/SAP90 at the plasma membrane. The polypeptide is Disks large-associated protein 4 (Dlgap4) (Mus musculus (Mouse)).